Here is a 196-residue protein sequence, read N- to C-terminus: Pyridoxal 5'-phosphate synthase subunit PdxT (196 aa).

An L-glutamine-binding site is contributed by 47-49 (GES). The Nucleophile role is filled by cysteine 79. L-glutamine contacts are provided by residues arginine 106 and 134–135 (IR). Residues histidine 170 and glutamate 172 each act as charge relay system in the active site.

Belongs to the glutaminase PdxT/SNO family. As to quaternary structure, in the presence of PdxS, forms a dodecamer of heterodimers. Only shows activity in the heterodimer.

It carries out the reaction aldehydo-D-ribose 5-phosphate + D-glyceraldehyde 3-phosphate + L-glutamine = pyridoxal 5'-phosphate + L-glutamate + phosphate + 3 H2O + H(+). It catalyses the reaction L-glutamine + H2O = L-glutamate + NH4(+). It participates in cofactor biosynthesis; pyridoxal 5'-phosphate biosynthesis. Catalyzes the hydrolysis of glutamine to glutamate and ammonia as part of the biosynthesis of pyridoxal 5'-phosphate. The resulting ammonia molecule is channeled to the active site of PdxS. This is Pyridoxal 5'-phosphate synthase subunit PdxT from Bacillus pumilus (strain SAFR-032).